Here is a 117-residue protein sequence, read N- to C-terminus: MNYDFSRELRLLTPEDYKSVFKQAHRAGSPHFTILARENSLSHPRLGLAVPKKQIKTAVGRNKFKRITRESFRNKQHSLPAKDFVVIAKKSAQELSNEDFNKLLDKLWHRLSRPSRG.

The protein belongs to the RnpA family. As to quaternary structure, consists of a catalytic RNA component (M1 or rnpB) and a protein subunit.

It catalyses the reaction Endonucleolytic cleavage of RNA, removing 5'-extranucleotides from tRNA precursor.. RNaseP catalyzes the removal of the 5'-leader sequence from pre-tRNA to produce the mature 5'-terminus. It can also cleave other RNA substrates such as 4.5S RNA. The protein component plays an auxiliary but essential role in vivo by binding to the 5'-leader sequence and broadening the substrate specificity of the ribozyme. In Aliivibrio salmonicida (strain LFI1238) (Vibrio salmonicida (strain LFI1238)), this protein is Ribonuclease P protein component.